Here is a 361-residue protein sequence, read N- to C-terminus: Phosphoserine aminotransferase (361 aa).

L-glutamate is bound at residue Arg-42. Pyridoxal 5'-phosphate-binding positions include 76–77 (AS), Trp-102, Thr-152, Asp-172, and Gln-195. An N6-(pyridoxal phosphate)lysine modification is found at Lys-196. 237–238 (NT) is a binding site for pyridoxal 5'-phosphate.

This sequence belongs to the class-V pyridoxal-phosphate-dependent aminotransferase family. SerC subfamily. Homodimer. It depends on pyridoxal 5'-phosphate as a cofactor.

It localises to the cytoplasm. It carries out the reaction O-phospho-L-serine + 2-oxoglutarate = 3-phosphooxypyruvate + L-glutamate. It catalyses the reaction 4-(phosphooxy)-L-threonine + 2-oxoglutarate = (R)-3-hydroxy-2-oxo-4-phosphooxybutanoate + L-glutamate. The protein operates within amino-acid biosynthesis; L-serine biosynthesis; L-serine from 3-phospho-D-glycerate: step 2/3. Catalyzes the reversible conversion of 3-phosphohydroxypyruvate to phosphoserine and of 3-hydroxy-2-oxo-4-phosphonooxybutanoate to phosphohydroxythreonine. The sequence is that of Phosphoserine aminotransferase from Halalkalibacterium halodurans (strain ATCC BAA-125 / DSM 18197 / FERM 7344 / JCM 9153 / C-125) (Bacillus halodurans).